The following is a 467-amino-acid chain: Methylenetetrahydrofolate--tRNA-(uracil-5-)-methyltransferase TrmFO (467 aa).

Residue 10 to 15 (GAGLAG) participates in FAD binding.

The protein belongs to the MnmG family. TrmFO subfamily. FAD is required as a cofactor.

The protein resides in the cytoplasm. The enzyme catalyses uridine(54) in tRNA + (6R)-5,10-methylene-5,6,7,8-tetrahydrofolate + NADH + H(+) = 5-methyluridine(54) in tRNA + (6S)-5,6,7,8-tetrahydrofolate + NAD(+). The catalysed reaction is uridine(54) in tRNA + (6R)-5,10-methylene-5,6,7,8-tetrahydrofolate + NADPH + H(+) = 5-methyluridine(54) in tRNA + (6S)-5,6,7,8-tetrahydrofolate + NADP(+). Its function is as follows. Catalyzes the folate-dependent formation of 5-methyl-uridine at position 54 (M-5-U54) in all tRNAs. The chain is Methylenetetrahydrofolate--tRNA-(uracil-5-)-methyltransferase TrmFO from Prochlorococcus marinus (strain MIT 9515).